The following is a 679-amino-acid chain: Methionine--tRNA ligase (679 aa).

Positions 14 to 24 match the 'HIGH' region motif; it reads PYANGSIHLGH. Zn(2+) contacts are provided by Cys145, Cys148, Cys158, and Cys161. The 'KMSKS' region signature appears at 331 to 335; it reads KMSKS. Lys334 lines the ATP pocket. The region spanning 577 to 679 is the tRNA-binding domain; the sequence is TFAAVDLRVA…SGAKPGQRIK (103 aa).

This sequence belongs to the class-I aminoacyl-tRNA synthetase family. MetG type 1 subfamily. As to quaternary structure, homodimer. Requires Zn(2+) as cofactor.

The protein localises to the cytoplasm. It catalyses the reaction tRNA(Met) + L-methionine + ATP = L-methionyl-tRNA(Met) + AMP + diphosphate. Is required not only for elongation of protein synthesis but also for the initiation of all mRNA translation through initiator tRNA(fMet) aminoacylation. The sequence is that of Methionine--tRNA ligase from Pseudomonas putida (strain GB-1).